A 199-amino-acid chain; its full sequence is UPF0301 protein Daci_1578 (199 aa).

It belongs to the UPF0301 (AlgH) family.

This chain is UPF0301 protein Daci_1578, found in Delftia acidovorans (strain DSM 14801 / SPH-1).